The sequence spans 315 residues: Probable cell division protein WhiA (315 aa).

The H-T-H motif DNA-binding region spans 280 to 313 (SLKELGEMLDPPVGKSGINHRLRKIEKIAEELRT).

Belongs to the WhiA family.

Involved in cell division and chromosome segregation. The sequence is that of Probable cell division protein WhiA from Clostridium beijerinckii (strain ATCC 51743 / NCIMB 8052) (Clostridium acetobutylicum).